Consider the following 395-residue polypeptide: L-rhamnonate dehydratase (395 aa).

Residues H23 and R49 each coordinate substrate. Residues D215, E241, and E269 each coordinate Mg(2+). H319 functions as the Proton acceptor in the catalytic mechanism. E339 is a binding site for substrate.

It belongs to the mandelate racemase/muconate lactonizing enzyme family. RhamD subfamily. Homooctamer; tetramer of dimers. Mg(2+) serves as cofactor.

It catalyses the reaction L-rhamnonate = 2-dehydro-3-deoxy-L-rhamnonate + H2O. Its function is as follows. Catalyzes the dehydration of L-rhamnonate to 2-keto-3-deoxy-L-rhamnonate (KDR). The sequence is that of L-rhamnonate dehydratase from Delftia acidovorans (strain DSM 14801 / SPH-1).